The following is a 341-amino-acid chain: Very-long-chain 3-oxoacyl-CoA reductase (341 aa).

The helical transmembrane segment at 22–42 (AVTGFLLVGIASFAAPLISTI) threads the bilayer. The NADP(+) site is built by leucine 67, aspartate 123, aspartate 131, asparagine 150, tyrosine 217, lysine 221, valine 250, and threonine 252. Residue tyrosine 217 is the Proton donor of the active site. The active-site Lowers pKa of active site Tyr is the lysine 221.

The protein belongs to the short-chain dehydrogenases/reductases (SDR) family.

The protein resides in the endoplasmic reticulum membrane. It catalyses the reaction a very-long-chain (3R)-3-hydroxyacyl-CoA + NADP(+) = a very-long-chain 3-oxoacyl-CoA + NADPH + H(+). The protein operates within lipid metabolism; fatty acid biosynthesis. Its function is as follows. Component of the microsomal membrane bound fatty acid elongation system, which produces the 26-carbon very long-chain fatty acids (VLCFA) from palmitate. Catalyzes the reduction of the 3-ketoacyl-CoA intermediate that is formed in each cycle of fatty acid elongation. VLCFAs serve as precursors for ceramide and sphingolipids. The sequence is that of Very-long-chain 3-oxoacyl-CoA reductase from Pyrenophora tritici-repentis (strain Pt-1C-BFP) (Wheat tan spot fungus).